The primary structure comprises 329 residues: T-cell acute lymphocytic leukemia protein 1 homolog (329 aa).

3 disordered regions span residues 1-28 (MTER…RMAP), 40-78 (ETSR…KGRD), and 91-125 (TELC…SPPA). At serine 12 the chain carries Phosphoserine. The segment covering 58 to 70 (SGAGGGPASGGGA) has biased composition (gly residues). Over residues 96–106 (PPGPAPAPAPA) the composition is skewed to pro residues. Serine 122 carries the post-translational modification Phosphoserine; by MAPK. At serine 172 the chain carries Phosphoserine. A bHLH domain is found at 187–239 (VRRIFTNSRERWRQQNVNGAFAELRKLIPTHPPDKKLSKNEILRLAMKYINFL). The interval 247–329 (EEEGTQRAKP…LPAADGAGPR (83 aa)) is disordered. Positions 263–273 (GAGGGGAGGGI) are enriched in gly residues. A compositionally biased stretch (low complexity) spans 317 to 329 (PALLPAADGAGPR).

In terms of assembly, efficient DNA binding requires dimerization with another bHLH protein. Forms heterodimers with TCF3. Binds to the LIM domain containing protein LMO2 and to DRG1. Can assemble in a complex with LDB1 and LMO2. Component of a TAL-1 complex composed at least of CBFA2T3, LDB1, TAL1 and TCF3. Interacts with SBNO2; this interaction inhibits TAL1 occupancy of the DCSTAMP promoter, leading to the activation of the DCSTAMP promoter by the transcription factor MITF. In terms of processing, phosphorylated on serine residues. Phosphorylation of Ser-122 by MAPK is strongly stimulated by hypoxia. Ubiquitinated; subsequent to hypoxia-dependent phosphorylation of Ser-122, ubiquitination targets the protein for rapid degradation via the ubiquitin system. This process may be characteristic for microvascular endothelial cells, since it could not be observed in large vessel endothelial cells. Erythroid and myeloid cells.

It localises to the nucleus. Functionally, implicated in the genesis of hemopoietic malignancies. It may play an important role in hemopoietic differentiation. Serves as a positive regulator of erythroid differentiation. In Mus musculus (Mouse), this protein is T-cell acute lymphocytic leukemia protein 1 homolog (Tal1).